The primary structure comprises 696 residues: DEAD-box ATP-dependent RNA helicase 7 (696 aa).

The interval 1–116 is disordered; it reads MPSLPVAAAE…GDEDPADPNA (116 aa). Residues 16-97 adopt a coiled-coil conformation; it reads ESASKKSKRK…KVVVEEEEED (82 aa). Positions 27 to 38 are enriched in basic and acidic residues; sequence KAAEVEVEASSR. Residues 39–49 show a composition bias toward basic residues; that stretch reads KKEKKEKKRKA. Positions 67–77 are enriched in low complexity; the sequence is STSSDEPAPAA. The span at 92–112 shows a compositional bias: acidic residues; the sequence is EEEEEDDDEGELTASGDEDPA. The Q motif signature appears at 115 to 143; sequence NALANFRISESLREKLKSKGIKALFPIQA. The region spanning 146-328 is the Helicase ATP-binding domain; it reads FDLVLDGHDL…LRFLKSGKKT (183 aa). 159-166 contacts ATP; sequence ARTGQGKT. Positions 274 to 277 match the DEAD box motif; that stretch reads DEAD. Positions 357 to 500 constitute a Helicase C-terminal domain; that stretch reads QVIPDIIRCY…ISAPQPTDVA (144 aa). Residues 641–696 are disordered; the sequence is LPPLQEREQSGGSRGGGRFGNRRFSGGGGGRGGGGRGFGGGRGRGGGGGNRFNKRY. The span at 652–690 shows a compositional bias: gly residues; the sequence is GSRGGGRFGNRRFSGGGGGRGGGGRGFGGGRGRGGGGGN.

It belongs to the DEAD box helicase family. DDX21/DDX50 subfamily.

The protein localises to the nucleus. The catalysed reaction is ATP + H2O = ADP + phosphate + H(+). The sequence is that of DEAD-box ATP-dependent RNA helicase 7 from Oryza sativa subsp. japonica (Rice).